Consider the following 374-residue polypeptide: Nucleosome assembly protein 1;3 (374 aa).

The stretch at 26-80 (VNALKNKLQNLAGQHSDVLENLTPKIRRRVEVLREIQGKHDEIETKFREERAALE) forms a coiled coil. A Phosphoserine modification is found at serine 41. The Nuclear export signal motif lies at 47-62 (LTPKIRRRVEVLREIQ). Positions 222-227 (KKKPKK) match the Nuclear localization signal motif. The span at 299–339 (IEGEEFEIDNDDEDDIDEDEDEDEEDEDEDEEEDDEDEEEE) shows a compositional bias: acidic residues. A disordered region spans residues 299–374 (IEGEEFEIDN…GERPPECKQQ (76 aa)). Basic residues predominate over residues 343–355 (TKKKPSVLHKKGG). Positions 364–374 (QGERPPECKQQ) are enriched in basic and acidic residues. Cysteine 371 carries the cysteine methyl ester modification. Cysteine 371 carries the S-farnesyl cysteine lipid modification. Positions 372-374 (KQQ) are cleaved as a propeptide — removed in mature form.

It belongs to the nucleosome assembly protein (NAP) family. In terms of assembly, can form homomeric and heteromeric protein complexes with NAP1;1, NAP1;2 and NAP1;4. Binds histone H2A and associates with chromatin in vivo. As to expression, ubiquitous.

The protein localises to the nucleus. It localises to the cytoplasm. In terms of biological role, may modulate chromatin structure by regulation of nucleosome assembly/disassembly. May function in nucleotide excision repair (NER). Involved in somatic homologous recombination. Could be involved in response to abscisic acid (ABA) and to salt stress. The protein is Nucleosome assembly protein 1;3 (NAP1;3) of Arabidopsis thaliana (Mouse-ear cress).